Here is a 285-residue protein sequence, read N- to C-terminus: Putative lipoprotein SCO4650 (285 aa).

A signal peptide spans 1–20 (MTGTTARRTVVSVAVSAALA). Cys-21 carries N-palmitoyl cysteine lipidation. Cys-21 carries the S-diacylglycerol cysteine lipid modification. The tract at residues 27 to 63 (GPGGSDDAGHSTGPTGSARPSASAPASSRAPALTGPS) is disordered. Residues 43 to 58 (SARPSASAPASSRAPA) show a composition bias toward low complexity.

Its subcellular location is the cell membrane. In Streptomyces coelicolor (strain ATCC BAA-471 / A3(2) / M145), this protein is Putative lipoprotein SCO4650.